The primary structure comprises 245 residues: Thiopurine S-methyltransferase (245 aa).

29-40 (WREKWVDGKIGF) serves as a coordination point for S-adenosyl-L-methionine. Phe-40 lines the substrate pocket. Lys-58 carries the post-translational modification N6-acetyllysine. Residues Leu-69, Glu-90, and Arg-152 each contribute to the S-adenosyl-L-methionine site.

Belongs to the class I-like SAM-binding methyltransferase superfamily. TPMT family. In terms of assembly, monomer.

It localises to the cytoplasm. It catalyses the reaction S-adenosyl-L-methionine + a thiopurine = S-adenosyl-L-homocysteine + a thiopurine S-methylether.. The polypeptide is Thiopurine S-methyltransferase (TPMT) (Panthera leo (Lion)).